Reading from the N-terminus, the 218-residue chain is Capsid protein (218 aa).

Position 1 is an N-acetylmethionine; by host (methionine 1). A disordered region spans residues 1-30 (MDKSESTSAGRNRRRRPRRGSRSAPSSSDA). Positions 11 to 21 (RNRRRRPRRGS) are enriched in basic residues.

This sequence belongs to the cucumovirus capsid protein family.

Its subcellular location is the virion. Capsid protein. Probably binds RNA and plays a role in packaging. The protein is Capsid protein of Cucumis sativus (Cucumber).